The following is a 225-amino-acid chain: Single-pass membrane and coiled-coil domain-containing protein 3 (225 aa).

A coiled-coil region spans residues 69 to 92; the sequence is IIQAMTKIQKELQKIDEALKDQLE. A helical membrane pass occupies residues 155-175; the sequence is IGTSLLGSIGVAVLSLGIDMI. A coiled-coil region spans residues 182-209; the sequence is AVERTQLQAAIKSYEKHLEEFKAASAKY.

It is found in the membrane. This chain is Single-pass membrane and coiled-coil domain-containing protein 3 (Smco3), found in Mus musculus (Mouse).